The chain runs to 264 residues: 3-methyl-2-oxobutanoate hydroxymethyltransferase (264 aa).

Positions 45 and 84 each coordinate Mg(2+). Residues 45–46, Asp-84, and Lys-112 contribute to the 3-methyl-2-oxobutanoate site; that span reads DS. Glu-114 is a Mg(2+) binding site. Catalysis depends on Glu-181, which acts as the Proton acceptor.

Belongs to the PanB family. In terms of assembly, homodecamer; pentamer of dimers. Mg(2+) is required as a cofactor.

It is found in the cytoplasm. It catalyses the reaction 3-methyl-2-oxobutanoate + (6R)-5,10-methylene-5,6,7,8-tetrahydrofolate + H2O = 2-dehydropantoate + (6S)-5,6,7,8-tetrahydrofolate. It participates in cofactor biosynthesis; (R)-pantothenate biosynthesis; (R)-pantoate from 3-methyl-2-oxobutanoate: step 1/2. In terms of biological role, catalyzes the reversible reaction in which hydroxymethyl group from 5,10-methylenetetrahydrofolate is transferred onto alpha-ketoisovalerate to form ketopantoate. The polypeptide is 3-methyl-2-oxobutanoate hydroxymethyltransferase (Vibrio atlanticus (strain LGP32) (Vibrio splendidus (strain Mel32))).